Reading from the N-terminus, the 255-residue chain is UPF0246 protein Cphy_1568 (255 aa).

The protein belongs to the UPF0246 family.

This is UPF0246 protein Cphy_1568 from Lachnoclostridium phytofermentans (strain ATCC 700394 / DSM 18823 / ISDg) (Clostridium phytofermentans).